The following is a 40-amino-acid chain: Photosystem II reaction center protein J (40 aa).

A helical membrane pass occupies residues 8–28 (IPLWIIGTVAGILVIGLIGIF).

This sequence belongs to the PsbJ family. PSII is composed of 1 copy each of membrane proteins PsbA, PsbB, PsbC, PsbD, PsbE, PsbF, PsbH, PsbI, PsbJ, PsbK, PsbL, PsbM, PsbT, PsbX, PsbY, PsbZ, Psb30/Ycf12, at least 3 peripheral proteins of the oxygen-evolving complex and a large number of cofactors. It forms dimeric complexes.

Its subcellular location is the plastid. It localises to the chloroplast thylakoid membrane. One of the components of the core complex of photosystem II (PSII). PSII is a light-driven water:plastoquinone oxidoreductase that uses light energy to abstract electrons from H(2)O, generating O(2) and a proton gradient subsequently used for ATP formation. It consists of a core antenna complex that captures photons, and an electron transfer chain that converts photonic excitation into a charge separation. The chain is Photosystem II reaction center protein J from Nicotiana sylvestris (Wood tobacco).